Here is a 469-residue protein sequence, read N- to C-terminus: Coumaroyl-CoA:anthocyanidin 3-O-glucoside-6''-O-coumaroyltransferase 1 (469 aa).

M1 bears the N-acetylmethionine mark. Residues H173 and D410 each act as proton acceptor in the active site.

This sequence belongs to the plant acyltransferase family. As to expression, highly expressed in flowers, leaves and roots. Lower levels of expression in stems and siliques.

Functionally, involved in the acylation of the 6'' position of the 3-O-glucose residue of anthocyanin. Also able to use flavonol 3-glucosides as the acyl acceptor. The polypeptide is Coumaroyl-CoA:anthocyanidin 3-O-glucoside-6''-O-coumaroyltransferase 1 (3AT1) (Arabidopsis thaliana (Mouse-ear cress)).